A 130-amino-acid polypeptide reads, in one-letter code: Small ribosomal subunit protein uS11 (130 aa).

It belongs to the universal ribosomal protein uS11 family. In terms of assembly, part of the 30S ribosomal subunit. Interacts with proteins S7 and S18. Binds to IF-3.

Functionally, located on the platform of the 30S subunit, it bridges several disparate RNA helices of the 16S rRNA. Forms part of the Shine-Dalgarno cleft in the 70S ribosome. The protein is Small ribosomal subunit protein uS11 of Nitratiruptor sp. (strain SB155-2).